The chain runs to 263 residues: 3-methyl-2-oxobutanoate hydroxymethyltransferase (263 aa).

Residues aspartate 45 and aspartate 84 each coordinate Mg(2+). Residues 45–46, aspartate 84, and lysine 112 contribute to the 3-methyl-2-oxobutanoate site; that span reads DS. Glutamate 114 is a Mg(2+) binding site. Glutamate 181 functions as the Proton acceptor in the catalytic mechanism.

The protein belongs to the PanB family. In terms of assembly, homodecamer; pentamer of dimers. It depends on Mg(2+) as a cofactor.

It localises to the cytoplasm. The enzyme catalyses 3-methyl-2-oxobutanoate + (6R)-5,10-methylene-5,6,7,8-tetrahydrofolate + H2O = 2-dehydropantoate + (6S)-5,6,7,8-tetrahydrofolate. It functions in the pathway cofactor biosynthesis; (R)-pantothenate biosynthesis; (R)-pantoate from 3-methyl-2-oxobutanoate: step 1/2. Catalyzes the reversible reaction in which hydroxymethyl group from 5,10-methylenetetrahydrofolate is transferred onto alpha-ketoisovalerate to form ketopantoate. The protein is 3-methyl-2-oxobutanoate hydroxymethyltransferase of Photorhabdus laumondii subsp. laumondii (strain DSM 15139 / CIP 105565 / TT01) (Photorhabdus luminescens subsp. laumondii).